We begin with the raw amino-acid sequence, 401 residues long: Argininosuccinate synthase (401 aa).

9–17 (AYSGGLDTS) is an ATP binding site. Position 86 (Tyr86) interacts with L-citrulline. Gly116 contacts ATP. L-aspartate is bound by residues Thr118, Asn122, and Asp123. Asn122 serves as a coordination point for L-citrulline. L-citrulline-binding residues include Arg126, Ser174, Ser183, Glu259, and Tyr271.

This sequence belongs to the argininosuccinate synthase family. Type 1 subfamily. In terms of assembly, homotetramer.

Its subcellular location is the cytoplasm. The enzyme catalyses L-citrulline + L-aspartate + ATP = 2-(N(omega)-L-arginino)succinate + AMP + diphosphate + H(+). Its pathway is amino-acid biosynthesis; L-arginine biosynthesis; L-arginine from L-ornithine and carbamoyl phosphate: step 2/3. The protein is Argininosuccinate synthase of Bacillus thuringiensis (strain Al Hakam).